Consider the following 261-residue polypeptide: 5'-nucleotidase SurE (261 aa).

Residues Asp-8, Asp-9, Ser-39, and Asn-94 each coordinate a divalent metal cation.

Belongs to the SurE nucleotidase family. A divalent metal cation is required as a cofactor.

The protein localises to the cytoplasm. The enzyme catalyses a ribonucleoside 5'-phosphate + H2O = a ribonucleoside + phosphate. Nucleotidase that shows phosphatase activity on nucleoside 5'-monophosphates. The sequence is that of 5'-nucleotidase SurE from Methanopyrus kandleri (strain AV19 / DSM 6324 / JCM 9639 / NBRC 100938).